Here is a 237-residue protein sequence, read N- to C-terminus: Ribosomal RNA small subunit methyltransferase G (237 aa).

S-adenosyl-L-methionine-binding positions include Gly78, Phe83, 129 to 130 (AE), and Arg148. The interval 218–237 (KKETPNKYPRKAGMPNKRPL) is disordered.

The protein belongs to the methyltransferase superfamily. RNA methyltransferase RsmG family.

The protein localises to the cytoplasm. Functionally, specifically methylates the N7 position of a guanine in 16S rRNA. This Streptococcus pneumoniae (strain ATCC BAA-255 / R6) protein is Ribosomal RNA small subunit methyltransferase G.